Here is a 408-residue protein sequence, read N- to C-terminus: Peptidase T (408 aa).

Histidine 78 is a Zn(2+) binding site. Aspartate 80 is an active-site residue. Aspartate 141 is a binding site for Zn(2+). Glutamate 175 functions as the Proton acceptor in the catalytic mechanism. The Zn(2+) site is built by glutamate 176, aspartate 198, and histidine 380.

This sequence belongs to the peptidase M20B family. Requires Zn(2+) as cofactor.

It is found in the cytoplasm. The catalysed reaction is Release of the N-terminal residue from a tripeptide.. In terms of biological role, cleaves the N-terminal amino acid of tripeptides. In Clostridium botulinum (strain ATCC 19397 / Type A), this protein is Peptidase T.